Here is a 520-residue protein sequence, read N- to C-terminus: MRLSNALVLVAACISSVVAKTRTFDFDLVNTRLAPDGFERDTVVINGEFPGTLIQVNKGDSVRIPLHNKLTSPTMRRSVSIHWHGFFQARTSGQDGPSFVNQCPQPPNTTFTYEFSVAEQSGTFWYHSHLSTQYCDGLRGAFIVYDPRDPLRHLYDVDDESTVITLAEWYHILAPDATNEFFSSGIIPVQDSGLINGKGRFNGGPLTPFAVVNVRRGKRYRLRVIAISCRPFFTFSVDNHSLVFMEADGVEHDPVEVQNVDIYAAQRVSVILHANQPIDNYWIRAPMTGGNPDRNPNLNISLTLAILRYHGARHVEPTTVNVPGHKLLDQEMHPIRQEGPGKLGDGPPDKHITLNIAQPNAPFFDINGISYISPTVPVLLQILSGAKRPEDVLPSEQIFFVPKNSLIEVNIPGEGAHPFHLHGHNFDVVLASNDDTFNFKNPPRRDVYPINGGNTTFRFFTDNPGAWFLHCHIDWHLEAGLAIVFAEAPEDNVSGPQSQITPQDWLDLCPEYNAIEPEFQ.

Residues 1-19 (MRLSNALVLVAACISSVVA) form the signal peptide. Plastocyanin-like domains lie at 21–145 (TRTF…FIVY), 157–305 (VDDE…LTLA), and 375–488 (TVPV…FAEA). Residues His82 and His84 each contribute to the Cu cation site. Intrachain disulfides connect Cys103–Cys509 and Cys135–Cys229. N-linked (GlcNAc...) asparagine glycosylation occurs at Asn108. Cu cation-binding residues include His127 and His129. N-linked (GlcNAc...) asparagine glycans are attached at residues Asn239 and Asn299. His417, His420, His422, His470, Cys471, His472, and His476 together coordinate Cu cation. N-linked (GlcNAc...) asparagine glycosylation occurs at Asn492.

It belongs to the multicopper oxidase family. The cofactor is Cu cation.

It is found in the secreted. It catalyses the reaction 4 hydroquinone + O2 = 4 benzosemiquinone + 2 H2O. Its function is as follows. Lignin degradation and detoxification of lignin-derived products. The sequence is that of Laccase-1 (lcc1) from Agaricus bisporus (White button mushroom).